The sequence spans 272 residues: 3-methyl-2-oxobutanoate hydroxymethyltransferase (272 aa).

Mg(2+)-binding residues include aspartate 42 and aspartate 86. 3-methyl-2-oxobutanoate is bound by residues 42–43, aspartate 86, and lysine 116; that span reads DS. Mg(2+) is bound at residue glutamate 118. Glutamate 185 serves as the catalytic Proton acceptor.

The protein belongs to the PanB family. In terms of assembly, homodecamer; pentamer of dimers. The cofactor is Mg(2+).

It is found in the cytoplasm. The catalysed reaction is 3-methyl-2-oxobutanoate + (6R)-5,10-methylene-5,6,7,8-tetrahydrofolate + H2O = 2-dehydropantoate + (6S)-5,6,7,8-tetrahydrofolate. Its pathway is cofactor biosynthesis; (R)-pantothenate biosynthesis; (R)-pantoate from 3-methyl-2-oxobutanoate: step 1/2. Catalyzes the reversible reaction in which hydroxymethyl group from 5,10-methylenetetrahydrofolate is transferred onto alpha-ketoisovalerate to form ketopantoate. In Prochlorococcus marinus (strain MIT 9313), this protein is 3-methyl-2-oxobutanoate hydroxymethyltransferase.